The chain runs to 237 residues: tRNA(His) guanylyltransferase (237 aa).

Residue Ala-2 is modified to N-acetylalanine. Residues Asp-29 and Gly-30 each contribute to the Mg(2+) site. GTP is bound by residues Lys-32, Phe-33, His-34, Lys-44, and Asp-47. Asp-77 serves as a coordination point for Mg(2+).

The protein belongs to the tRNA(His) guanylyltransferase family. In terms of assembly, homotetramer. The cofactor is Mg(2+).

The catalysed reaction is a 5'-end ribonucleotide-tRNA(His) + GTP + ATP + H2O = a 5'-end phospho-guanosine-ribonucleotide-tRNA(His) + AMP + 2 diphosphate + H(+). It carries out the reaction a 5'-end ribonucleotide-RNA + a ribonucleoside 5'-triphosphate + ATP + H2O = a 5'-end phospho-ribonucleoside-ribonucleotide-RNA + AMP + 2 diphosphate + H(+). Acts as a tRNA(His) guanylyltransferase that catalyzes 3'-5' addition of a single guanosine residue to the -1 position of tRNA(His), to form a non-Watson-Crick G(-1):A-73 base pair. After addition of G(-1), THG1 removes pyrophosphate from the tRNA 5'-end, generating 5'-monophosphorylated G(-1)-containing tRNA which is important for recognition of tRNA(His) by its cognate histidyl-tRNA synthetase. In addition to the single-G(-1) addition reaction, THG1 polymerizes multiple G residues to the 5'-end of tRNA(His) variants using the 3'-end of the tRNA(His) acceptor stem as a template. The polypeptide is tRNA(His) guanylyltransferase (Saccharomyces cerevisiae (strain ATCC 204508 / S288c) (Baker's yeast)).